We begin with the raw amino-acid sequence, 741 residues long: Translation initiation factor IF-2 (741 aa).

Basic and acidic residues-rich tracts occupy residues 48–74 (HQYR…DKPK) and 107–123 (KGKE…EKKA). The segment at 48–158 (HQYRPKAEKK…PQPAKKEKEL (111 aa)) is disordered. Residues 127–139 (AKKKGKGPAKGKK) show a composition bias toward basic residues. Over residues 140-151 (QAAPAAKQVPQP) the composition is skewed to low complexity. One can recognise a tr-type G domain in the interval 242–411 (ERPPVVTIMG…LLVSEMEELK (170 aa)). Positions 251–258 (GHVDHGKT) are G1. A GTP-binding site is contributed by 251–258 (GHVDHGKT). Residues 276–280 (GITQH) are G2. The segment at 297–300 (DTPG) is G3. GTP contacts are provided by residues 297–301 (DTPGH) and 351–354 (NKMD). The G4 stretch occupies residues 351–354 (NKMD). Residues 387–389 (SAK) are G5.

This sequence belongs to the TRAFAC class translation factor GTPase superfamily. Classic translation factor GTPase family. IF-2 subfamily.

It localises to the cytoplasm. Its function is as follows. One of the essential components for the initiation of protein synthesis. Protects formylmethionyl-tRNA from spontaneous hydrolysis and promotes its binding to the 30S ribosomal subunits. Also involved in the hydrolysis of GTP during the formation of the 70S ribosomal complex. The chain is Translation initiation factor IF-2 (infB) from Geobacillus stearothermophilus (Bacillus stearothermophilus).